The sequence spans 591 residues: MACLECKKRKQKCDGQKPCRRCTKLNVKCIYGTDRRKDKRKIKDGSNMFIFKNQTLCNDKINGIVPHPLSHDTITTKETWEPSYPLFSDDINPADIISMENTDGSIPLQFDLDFTSLESCDVNDFLRLIGDTFPANDADTLDMNQMGGFNTPSISHNTQDDKSQIAIQRNRLIDVIFGDDSHTPPGILREHIFELSERHEDLEALDFDDNGKFLLSTVLCLGALTLRKRELLNRDSNQPSTNGIPEVAAGAYKYYTIATDLIPAVHAAPNIDGFCGLVLMANFMTIMIPLEGQLYLSNNALEVAVALNFHKRESYDEMIVSNPAQLGVFLLFWNLWCSSCMLATLLGKQPFLTLDNISLPPPHQMQHTVSSSPLSINFMRLRIQLATLQTKIFQRLYVYGSLNKVLFQEIETELSLLSTQISNMKCYPIYDEGLFYRSKVLMLELSCLKAHNAFLLYRPNLIQKKSLHAVDAAKHIILEIWSHYTKQFPKNEKDLVDHLDWNFSYPLRTASLTLSISCVILQKYQQSLNFLEEYGIFEYNLALGVLNDLIQVVPIEKRLINLLTVSRTTVEDANESNREDSLRFWTNMLMC.

A DNA-binding region (zn(2)-C6 fungal-type) is located at residues 3–29 (CLECKKRKQKCDGQKPCRRCTKLNVKC).

The protein resides in the nucleus. In terms of biological role, transcription factor involved in regulation of the PUL gene cluster that mediates the formation of pulcherrimin, a red iron-containing pigment composed of two cyclized and modified leucine molecules that acts as a siderophore, a chelator that binds iron outside the cell for subsequent uptake. This Kluyveromyces lactis (strain ATCC 8585 / CBS 2359 / DSM 70799 / NBRC 1267 / NRRL Y-1140 / WM37) (Yeast) protein is Transcriptional regulator PUL4.